We begin with the raw amino-acid sequence, 459 residues long: Protein YTP1 (459 aa).

The Extracellular portion of the chain corresponds to 1 to 6 (MTAANK). A helical transmembrane segment spans residues 7-27 (NIVFGFSRSISAILLICFFFE). The Cytoplasmic portion of the chain corresponds to 28–59 (KVCGDMEHDMGMDDTSGYTRPEIVQAGSKSFH). The chain crosses the membrane as a helical span at residues 60-80 (WLCTLGFLLLLPSVVTCLSFA). The Extracellular segment spans residues 81-82 (GR). A helical membrane pass occupies residues 83–103 (IYSATLLQCTCAVYAFLEAAV). Residues 104–122 (LRFQDNDGVENRTSRGTAW) are Cytoplasmic-facing. The chain crosses the membrane as a helical span at residues 123 to 143 (FLVGLTWITLFFGGLAGGTGF). The Extracellular segment spans residues 144-170 (LVKSKRLQTFISNAGEKRLSYIHRGLS). The helical transmembrane segment at 171–191 (FLTVLTGWVKVCLAPVALFGF) threads the bilayer. Residues 192 to 205 (CREAHTGQCIAHGI) are Cytoplasmic-facing. The chain crosses the membrane as a helical span at residues 206–226 (MGSAFVLYGFIYVLVLVIPWI). Residues 227 to 266 (RSAQTSYSQDYVDSWVMCIWGVVNTFTEHRWGREGWSVHD) are Extracellular-facing. The chain crosses the membrane as a helical span at residues 267–287 (YQHTFMGIIWWTGGILGIFLS). Over 288 to 295 (RNGRRTFV) the chain is Cytoplasmic. A helical membrane pass occupies residues 296-316 (PSLIIIFTGWAMSEHAQHLII). Residues 317–322 (STKVHN) are Extracellular-facing. A helical transmembrane segment spans residues 323 to 343 (MFGLVLMCGGALRIIEISFLL). Over 344 to 351 (RDKRTLDK) the chain is Cytoplasmic. Residues 352–372 (IHSFQYLAPFCLVCSGLLFMG) form a helical membrane-spanning segment. At 373–389 (ANEEQLILVLRLGGDHS) the chain is on the extracellular side. Residues 390 to 410 (AYVLIIVSGAFLVYFWMIACL) traverse the membrane as a helical segment. Residues 411 to 459 (EFYLYLLEKGKQGFLPKSYELEEENNNVSFELDNISNEDVDEDTTPFNV) are Cytoplasmic-facing.

The protein localises to the membrane. This Saccharomyces cerevisiae (strain ATCC 204508 / S288c) (Baker's yeast) protein is Protein YTP1 (YTP1).